The following is a 413-amino-acid chain: Histidinol-phosphate aminotransferase, chloroplastic (413 aa).

The N-terminal 35 residues, Met-1–Met-35, are a transit peptide targeting the chloroplast. N6-(pyridoxal phosphate)lysine is present on Lys-273.

Belongs to the class-II pyridoxal-phosphate-dependent aminotransferase family. Histidinol-phosphate aminotransferase subfamily. Homodimer. It depends on pyridoxal 5'-phosphate as a cofactor. Expressed in flowers, leaves, stems and roots.

The protein resides in the plastid. It localises to the chloroplast. The catalysed reaction is L-histidinol phosphate + 2-oxoglutarate = 3-(imidazol-4-yl)-2-oxopropyl phosphate + L-glutamate. The protein operates within amino-acid biosynthesis; L-histidine biosynthesis; L-histidine from 5-phospho-alpha-D-ribose 1-diphosphate: step 7/9. The chain is Histidinol-phosphate aminotransferase, chloroplastic (HPA) from Nicotiana plumbaginifolia (Leadwort-leaved tobacco).